A 574-amino-acid polypeptide reads, in one-letter code: MKRKWEERVKKVEELASYYERNPLPTVYKPRLSKPLQPSRVWKIFCRQADAFRFVKTCKEDVHVFALERNTQNGQRFYLVTTYQELWYYYTKGYKTSLMHCYEVIPEKDACKLYFDLEFYKAANPGADGKDMVAKLIELVSQKLKELYDVNCSARDVLNLDSSTDEKFSRHLIFLPCKTVFKDNIHVGNFVRTILQPAIRLVGSNVAAPIAEGGAGYTSQCSAPTVELDGPLTNLTAVEDASKGWPAIADQRKETETSHHGENSEFSFLIVNNKEGDKQLFVDLGVYTRNRNFRMYKSSKAGKNVILTIAEDNKFVPNCEENVSLEEAYFLSSLVCNVRFEDGTKILSSNFVEEEIKMSAFLRSKTTRSTREPMEGYQESPYPEIDCFVRSLINKDGVQGGIRQWNYFSGEEILVYDISGYRWCENIGRAHRSNNIMILVDLKKEVWYQKCHDPVCREKNFKSQSLPLPSRICLSSLFIEEEDHMVTDERENTEVTSHSNPADLSESSAYLAINTSQDTQWDNASDDAYLVETAEDVELAEAADYSLGYDTEEIPDEVLLEMSWKQDTCSKDDS.

The stretch at 2 to 22 forms a coiled coil; sequence KRKWEERVKKVEELASYYERN. Residues Arg76, 116–118, 167–171, 291–294, and Lys300 each bind substrate; these read DLE, KFSRH, and RNFR. Residues Asp116 and Glu118 each coordinate Mn(2+). Cys424, His431, Cys451, and Cys456 together coordinate Zn(2+). Residues 424-457 carry the Zinc knuckle motif motif; that stretch reads CENIGRAHRSNNIMILVDLKKEVWYQKCHDPVCR.

This sequence belongs to the eukaryotic-type primase small subunit family. It depends on Mn(2+) as a cofactor.

The protein resides in the nucleus. Its subcellular location is the mitochondrion matrix. The protein localises to the chromosome. The catalysed reaction is ssDNA + n NTP = ssDNA/pppN(pN)n-1 hybrid + (n-1) diphosphate.. The enzyme catalyses DNA(n) + a 2'-deoxyribonucleoside 5'-triphosphate = DNA(n+1) + diphosphate. Its function is as follows. DNA primase and DNA polymerase required to tolerate replication-stalling lesions by bypassing them. Required to facilitate mitochondrial and nuclear replication fork progression by initiating de novo DNA synthesis using dNTPs and acting as an error-prone DNA polymerase able to bypass certain DNA lesions. Shows a high capacity to tolerate DNA damage lesions such as 8oxoG and abasic sites in DNA. Provides different translesion synthesis alternatives when DNA replication is stalled: able to synthesize DNA primers downstream of lesions, such as UV lesions, R-loops and G-quadruplexes, to allow DNA replication to continue. Can also realign primers ahead of 'unreadable lesions' such as abasic sites and 6-4 photoproduct (6-4 pyrimidine-pyrimidinone), thereby skipping the lesion. Repriming avoids fork degradation while leading to accumulation of internal ssDNA gaps behind the forks. Also able to incorporate nucleotides opposite DNA lesions such as 8oxoG, like a regular translesion synthesis DNA polymerase. Also required for reinitiating stalled forks after ultraviolet (UV) damage during nuclear DNA replication. Required for mitochondrial DNA (mtDNA) synthesis and replication, by reinitiating synthesis after UV damage or in the presence of chain-terminating nucleotides. In addition to its role in DNA damage response, also required to maintain efficient nuclear and mitochondrial DNA replication in unperturbed cells. This Gallus gallus (Chicken) protein is DNA-directed primase/polymerase protein.